The sequence spans 608 residues: tRNA (guanine(37)-N(1))-methyltransferase 1 (608 aa).

A disordered region spans residues 207-229 (SRPKKKKRRKEEERSEGKKRTGK). Basic and acidic residues predominate over residues 216 to 229 (KEEERSEGKKRTGK). Residues Arg-425, 463 to 464 (DL), 491 to 492 (DG), and Asn-514 each bind S-adenosyl-L-methionine.

Belongs to the class I-like SAM-binding methyltransferase superfamily. TRM5/TYW2 family. As to quaternary structure, monomer.

The protein resides in the mitochondrion matrix. The protein localises to the nucleus. It localises to the cytoplasm. The enzyme catalyses guanosine(37) in tRNA + S-adenosyl-L-methionine = N(1)-methylguanosine(37) in tRNA + S-adenosyl-L-homocysteine + H(+). Its function is as follows. Specifically methylates the N1 position of guanosine-37 in various cytoplasmic and mitochondrial tRNAs. Methylation is not dependent on the nature of the nucleoside 5' of the target nucleoside. This is the first step in the biosynthesis of wybutosine (yW), a modified base adjacent to the anticodon of tRNAs and required for accurate decoding. This is tRNA (guanine(37)-N(1))-methyltransferase 1 from Vitis vinifera (Grape).